The following is a 231-amino-acid chain: GFP-like fluorescent chromoprotein FP506 (231 aa).

The 5-imidazolinone (Asn-Gly) cross-link spans 66 to 68; sequence NYG. Tyrosine 67 is subject to 2,3-didehydrotyrosine.

Belongs to the GFP family. In terms of processing, contains a chromophore consisting of modified amino acid residues. The chromophore is formed by autocatalytic backbone condensation between Xaa-N and Gly-(N+2), and oxidation of Tyr-(N+1) to didehydrotyrosine. Maturation of the chromophore requires nothing other than molecular oxygen. The precise stereochemistry of the tyrosine has not been determined. In terms of tissue distribution, tentacle and oral disk.

Pigment protein that is yellow-green in color. In Zoanthus sp. (Green polyp), this protein is GFP-like fluorescent chromoprotein FP506.